Here is a 698-residue protein sequence, read N- to C-terminus: Protein SST2 (698 aa).

Residues 10–203 (ELSSKNFSRT…GAKPNVWSPT (194 aa)) form a fungal-DR region. At Ser252 the chain carries Phosphoserine. The DEP domain maps to 273–358 (SNAGIRLFEN…SRSSFFTLSK (86 aa)). Ser408 is subject to Phosphoserine. Residues 420–689 (KLDYVLTDPG…TQSDVYKDAS (270 aa)) enclose the RGS domain. A Phosphoserine; by MAPK modification is found at Ser539. The disordered stretch occupies residues 545–586 (FPTNLYDPSPASAESAASSISSTEADTLGEPPEVSLKPSKNL). The segment covering 551–570 (DPSPASAESAASSISSTEAD) has biased composition (low complexity). Ser587 is modified (phosphoserine).

In terms of processing, phosphorylated by FUS3 and KSS1.

Desensitization to alpha-factor pheromone. Is involved in regulating the signaling pathway for responding to mating pheromone. This is Protein SST2 (SST2) from Saccharomyces cerevisiae (strain ATCC 204508 / S288c) (Baker's yeast).